A 250-amino-acid chain; its full sequence is Small ribosomal subunit protein uS3 (250 aa).

Positions 39 to 109 (IRNYVQARLK…EVKIDVVEVI (71 aa)) constitute a KH type-2 domain. A compositionally biased stretch (basic and acidic residues) spans 225–239 (INERRGDSKSRPRDP). Residues 225 to 250 (INERRGDSKSRPRDPRNKRRRRTKRS) form a disordered region. Residues 240–250 (RNKRRRRTKRS) are compositionally biased toward basic residues.

The protein belongs to the universal ribosomal protein uS3 family. Part of the 30S ribosomal subunit. Forms a tight complex with proteins S10 and S14.

In terms of biological role, binds the lower part of the 30S subunit head. Binds mRNA in the 70S ribosome, positioning it for translation. This Chlorobium phaeobacteroides (strain DSM 266 / SMG 266 / 2430) protein is Small ribosomal subunit protein uS3.